A 272-amino-acid polypeptide reads, in one-letter code: Diaminopimelate epimerase (272 aa).

Substrate is bound by residues N11 and N63. The Proton donor role is filled by C72. Substrate-binding positions include 73–74 (GN), N190, and 208–209 (ER). The active-site Proton acceptor is the C217. Residue 218–219 (GT) coordinates substrate.

Belongs to the diaminopimelate epimerase family. Homodimer.

The protein localises to the cytoplasm. The enzyme catalyses (2S,6S)-2,6-diaminopimelate = meso-2,6-diaminopimelate. Its pathway is amino-acid biosynthesis; L-lysine biosynthesis via DAP pathway; DL-2,6-diaminopimelate from LL-2,6-diaminopimelate: step 1/1. In terms of biological role, catalyzes the stereoinversion of LL-2,6-diaminopimelate (L,L-DAP) to meso-diaminopimelate (meso-DAP), a precursor of L-lysine and an essential component of the bacterial peptidoglycan. The chain is Diaminopimelate epimerase from Clostridium perfringens (strain 13 / Type A).